The chain runs to 60 residues: Large ribosomal subunit protein bL32 (60 aa).

Belongs to the bacterial ribosomal protein bL32 family.

This is Large ribosomal subunit protein bL32 from Moorella thermoacetica (strain ATCC 39073 / JCM 9320).